Consider the following 37-residue polypeptide: FRGRDAAAKASGLVGLTDRRGCCSHPACNVDHPEICG.

A propeptide spanning residues 1–20 (FRGRDAAAKASGLVGLTDRR) is cleaved from the precursor. 2 disulfides stabilise this stretch: C22–C28 and C23–C36. Residues 24-26 (SHP) form a ser-Xaa-Pro motif, crucial for potent interaction with nAChR region. C36 carries the post-translational modification Cysteine amide.

Belongs to the conotoxin A superfamily. Expressed by the venom duct.

The protein localises to the secreted. Alpha-conotoxins act on postsynaptic membranes, they bind to the nicotinic acetylcholine receptors (nAChR) and thus inhibit them. This toxin blocks alpha-3-beta-2/CHRNA3-CHRNB2 nAChR with high selectivity (IC(50)=8.67 nM (on rat) and 17.5 (on human)). Also has weaker activity on alpha-6/alpha-3-beta-2-beta-3 (CHRNA6/CHRNA3-CHRNB2-CHRNB3) (IC(50)=108 nM (on rat)), alpha-6/alpha-3-beta-4 (CHRNA6/CHRNA3-CHRNB4) (IC(50)=121 nM (on rat)), alpha-3-beta-4 (CHRNA3-CHRNB4) (IC(50)=148 nM (on rat)), and alpha-7/CHRNA7 nAChRs (IC(50)=3000 nM (on rat)). When tested on mouse with hot-plate tests, this toxin significantly increases the base pain threshold and shows analgesic effects. The polypeptide is Alpha-conotoxin LvIA (Conus lividus (Livid cone)).